The following is a 285-amino-acid chain: Chalcone synthase 6-4 (285 aa).

Cys-60 is a catalytic residue.

Belongs to the thiolase-like superfamily. Chalcone/stilbene synthases family.

The catalysed reaction is (E)-4-coumaroyl-CoA + 3 malonyl-CoA + 3 H(+) = 2',4,4',6'-tetrahydroxychalcone + 3 CO2 + 4 CoA. It participates in secondary metabolite biosynthesis; flavonoid biosynthesis. In terms of biological role, the primary product of this enzyme is 4,2',4',6'-tetrahydroxychalcone (also termed naringenin-chalcone or chalcone) which can under specific conditions spontaneously isomerize into naringenin. This is Chalcone synthase 6-4 (CHS6-4) from Medicago sativa (Alfalfa).